The following is a 481-amino-acid chain: 6-phosphogluconate dehydrogenase, decarboxylating (481 aa).

Residues 11 to 16 (GLAVMG), 34 to 36 (NRT), 76 to 78 (VKA), and Asn-104 contribute to the NADP(+) site. Substrate-binding positions include Asn-104 and 130–132 (SGG). Lys-184 (proton acceptor) is an active-site residue. 187 to 188 (HN) is a binding site for substrate. Glu-191 functions as the Proton donor in the catalytic mechanism. Residues Tyr-192, Lys-259, Arg-286, Arg-445, and His-451 each coordinate substrate.

It belongs to the 6-phosphogluconate dehydrogenase family. Homodimer.

It carries out the reaction 6-phospho-D-gluconate + NADP(+) = D-ribulose 5-phosphate + CO2 + NADPH. Its pathway is carbohydrate degradation; pentose phosphate pathway; D-ribulose 5-phosphate from D-glucose 6-phosphate (oxidative stage): step 3/3. In terms of biological role, catalyzes the oxidative decarboxylation of 6-phosphogluconate to ribulose 5-phosphate and CO(2), with concomitant reduction of NADP to NADPH. In Drosophila melanogaster (Fruit fly), this protein is 6-phosphogluconate dehydrogenase, decarboxylating (Pgd).